Reading from the N-terminus, the 129-residue chain is Small ribosomal subunit protein uS9 (129 aa).

It belongs to the universal ribosomal protein uS9 family.

This Chlorobium phaeovibrioides (strain DSM 265 / 1930) (Prosthecochloris vibrioformis (strain DSM 265)) protein is Small ribosomal subunit protein uS9.